The chain runs to 84 residues: Large ribosomal subunit protein bL27 (84 aa).

The segment at 1–20 (MAHKKAGGSTRNGRDSNPKY) is disordered.

Belongs to the bacterial ribosomal protein bL27 family.

The polypeptide is Large ribosomal subunit protein bL27 (Francisella philomiragia subsp. philomiragia (strain ATCC 25017 / CCUG 19701 / FSC 153 / O#319-036)).